Consider the following 260-residue polypeptide: uncharacterized protein (260 aa).

The N-terminal stretch at 1–22 is a signal peptide; the sequence is MGYLKGFALYISILILIVFIAG. A lipid anchor (N-palmitoyl cysteine) is attached at Cys23. The S-diacylglycerol cysteine moiety is linked to residue Cys23.

This sequence belongs to the staphylococcal tandem lipoprotein family.

It is found in the cell membrane. This is an uncharacterized protein from Staphylococcus aureus (strain MSSA476).